Consider the following 398-residue polypeptide: 1-deoxy-D-xylulose 5-phosphate reductoisomerase (398 aa).

8 residues coordinate NADPH: Thr10, Gly11, Ser12, Ile13, Gly36, Lys37, Asn38, and Asn124. Lys125 serves as a coordination point for 1-deoxy-D-xylulose 5-phosphate. Glu126 is a binding site for NADPH. A Mn(2+)-binding site is contributed by Asp150. 1-deoxy-D-xylulose 5-phosphate contacts are provided by Ser151, Glu152, Ser186, and His209. Glu152 serves as a coordination point for Mn(2+). Gly215 is a binding site for NADPH. 1-deoxy-D-xylulose 5-phosphate is bound by residues Ser222, Asn227, Lys228, and Glu231. Glu231 contacts Mn(2+).

Belongs to the DXR family. In terms of assembly, homodimer. The cofactor is Mg(2+). Mn(2+) is required as a cofactor.

The catalysed reaction is 2-C-methyl-D-erythritol 4-phosphate + NADP(+) = 1-deoxy-D-xylulose 5-phosphate + NADPH + H(+). It participates in isoprenoid biosynthesis; isopentenyl diphosphate biosynthesis via DXP pathway; isopentenyl diphosphate from 1-deoxy-D-xylulose 5-phosphate: step 1/6. In terms of biological role, catalyzes the NADPH-dependent rearrangement and reduction of 1-deoxy-D-xylulose-5-phosphate (DXP) to 2-C-methyl-D-erythritol 4-phosphate (MEP). The sequence is that of 1-deoxy-D-xylulose 5-phosphate reductoisomerase from Shigella flexneri.